Consider the following 115-residue polypeptide: SPbeta prophage-derived uncharacterized membrane protein YosE (115 aa).

3 helical membrane-spanning segments follow: residues 20–42, 58–78, and 95–115; these read IVVG…YGLN, VHVT…FVKG, and GKSL…TLFI.

It localises to the cell membrane. This chain is SPbeta prophage-derived uncharacterized membrane protein YosE (yosE), found in Bacillus subtilis (strain 168).